We begin with the raw amino-acid sequence, 187 residues long: Putative manganese efflux pump MntP (187 aa).

The next 6 membrane-spanning stretches (helical) occupy residues 3-23, 39-59, 65-85, 106-126, 129-149, and 166-186; these read YYTL…VSVG, IALC…YVGS, ISEF…INMI, LTML…SFAF, VNIW…SLFG, and LLGG…HRVF.

The protein belongs to the MntP (TC 9.B.29) family.

The protein localises to the cell inner membrane. In terms of biological role, probably functions as a manganese efflux pump. This Actinobacillus succinogenes (strain ATCC 55618 / DSM 22257 / CCUG 43843 / 130Z) protein is Putative manganese efflux pump MntP.